The following is a 568-amino-acid chain: Sulfite reductase [NADPH] hemoprotein beta-component (568 aa).

4 residues coordinate [4Fe-4S] cluster: Cys425, Cys431, Cys470, and Cys474. Siroheme is bound at residue Cys474.

This sequence belongs to the nitrite and sulfite reductase 4Fe-4S domain family. In terms of assembly, alpha(8)-beta(8). The alpha component is a flavoprotein, the beta component is a hemoprotein. The cofactor is siroheme. Requires [4Fe-4S] cluster as cofactor.

It catalyses the reaction hydrogen sulfide + 3 NADP(+) + 3 H2O = sulfite + 3 NADPH + 4 H(+). It functions in the pathway sulfur metabolism; hydrogen sulfide biosynthesis; hydrogen sulfide from sulfite (NADPH route): step 1/1. Functionally, component of the sulfite reductase complex that catalyzes the 6-electron reduction of sulfite to sulfide. This is one of several activities required for the biosynthesis of L-cysteine from sulfate. In Xanthomonas oryzae pv. oryzae (strain MAFF 311018), this protein is Sulfite reductase [NADPH] hemoprotein beta-component.